Reading from the N-terminus, the 99-residue chain is METLTFEFPAGAPARGRALAGCVGSGDLEVLLEPAAGGALSIQVVTSVNGSGPRWQQLFARVFAASTAPAASIRIHDFGATPGVVRLRLEQALEEAGHD.

Ser-25 bears the O-(phosphoribosyl dephospho-coenzyme A)serine mark.

Belongs to the MdcC family. In terms of processing, covalently binds the prosthetic group of malonate decarboxylase.

It localises to the cytoplasm. Its function is as follows. Subunit of malonate decarboxylase, it is an acyl carrier protein to which acetyl and malonyl thioester residues are bound via a 2'-(5''-phosphoribosyl)-3'-dephospho-CoA prosthetic group and turn over during the catalytic mechanism. The chain is Malonate decarboxylase acyl carrier protein from Pseudomonas aeruginosa (strain UCBPP-PA14).